An 88-amino-acid chain; its full sequence is Small ribosomal subunit protein bS20 (88 aa).

The segment at 1–27 (MANIKSQIKRNKTNEKARLRNKAVKSS) is disordered.

This sequence belongs to the bacterial ribosomal protein bS20 family.

Its function is as follows. Binds directly to 16S ribosomal RNA. This is Small ribosomal subunit protein bS20 from Streptomyces griseus subsp. griseus (strain JCM 4626 / CBS 651.72 / NBRC 13350 / KCC S-0626 / ISP 5235).